Consider the following 422-residue polypeptide: Regulator of sigma-W protease RasP (422 aa).

The next 4 membrane-spanning stretches (helical) occupy residues 6–26 (VIAF…GHLL), 175–195 (IAAG…MLGL), 346–366 (IVNL…VNLL), and 394–414 (EAFV…VVTW). Position 20 (histidine 20) interacts with Zn(2+). Glutamate 21 is an active-site residue. A Zn(2+)-binding site is contributed by histidine 24. The 86-residue stretch at 186–271 (AYVILVMLGL…TLHISVTPEA (86 aa)) folds into the PDZ domain.

Belongs to the peptidase M50B family. The cofactor is Zn(2+).

The protein localises to the cell membrane. Its function is as follows. Is responsible for site-2 cleavage of the RsiW anti-sigma factor. This results, after a third proteolytic step catalyzed by the ClpXP protease, in the release of SigW and the transcription activation of the genes under the control of the sigma-W factor. Can also cleave liberated signal peptides of PenP and Mpr, probably within in the cell membrane. This Bacillus subtilis (strain 168) protein is Regulator of sigma-W protease RasP.